Reading from the N-terminus, the 769-residue chain is Post-GPI attachment to proteins factor 6 (769 aa).

Residues 1–33 form the signal peptide; it reads MGRVGAGGTAREAATGSLLLLLLLLARPPPAAA. Residues 34–543 are Extracellular-facing; it reads SNSKESEAGL…STAQTVAQQR (510 aa). 2 N-linked (GlcNAc...) asparagine glycosylation sites follow: Asn-138 and Asn-411. The EGF-like domain occupies 495 to 531; it reads PCLNDCGPYGQCLLLRRYGYVYAGCSCKAGWRGWSCT. Disulfide bonds link Cys-496–Cys-506, Cys-500–Cys-519, and Cys-521–Cys-530. Residues 544–564 traverse the membrane as a helical segment; that stretch reads AAALLLTLSNLMFLAPIAISL. Topologically, residues 565-567 are cytoplasmic; that stretch reads HRS. The helical transmembrane segment at 568-588 threads the bilayer; it reads FLVEASVYFYTMFFSTFYHAC. Topologically, residues 589 to 603 are extracellular; sequence DQPGEAVLCILSYDT. Residues 604–624 form a helical membrane-spanning segment; it reads LQYCDFLGSGASTWVTILCMA. Topologically, residues 625 to 627 are cytoplasmic; that stretch reads RLK. Residues 628-648 traverse the membrane as a helical segment; sequence TILKQVLLVLGTLVIAMSLQM. At 649-651 the chain is on the extracellular side; the sequence is DRR. A helical membrane pass occupies residues 652-672; that stretch reads GIWNLMGPCVFAFVIMASMWI. The Cytoplasmic portion of the chain corresponds to 673-688; sequence YRCGHRGQCYPTSWQR. The chain crosses the membrane as a helical span at residues 689–709; sequence WVFYLLPGISMASVGIAMYTS. At 710–715 the chain is on the extracellular side; that stretch reads MMTSDN. The chain crosses the membrane as a helical span at residues 716 to 736; sequence YYYTHSIWHILLAGSAAFLLP. Topologically, residues 737–769 are cytoplasmic; it reads PREEKAGSWACLQKFPCHYQICRNDRDELYTVT.

Belongs to the TMEM8 family. Post-translationally, glycosylated.

It localises to the cell membrane. It is found in the lysosome membrane. The enzyme catalyses a 1,2-diacyl-sn-glycero-3-phosphocholine + H2O = a 1-acyl-sn-glycero-3-phosphocholine + a fatty acid + H(+). Functionally, involved in the lipid remodeling steps of GPI-anchor maturation. Lipid remodeling steps consist in the generation of 2 saturated fatty chains at the sn-2 position of GPI-anchor proteins (GPI-AP). Has phospholipase A2 activity that removes an acyl-chain at the sn-2 position of GPI-anchors during the remodeling of GPI. Required for the shedding of the GPI-AP CRIPTO, but not CFC1, at the cell surface. Shedding of CRIPTO modulates Nodal signaling by allowing soluble CRIPTO to act as a Nodal coreceptor on other cells. Also indirectly involved in the translocation of RAC1 from the cytosol to the plasma membrane by maintaining the steady state amount of CAV1-enriched plasma membrane subdomains, stabilizing RAC1 at the plasma membrane. This Mus musculus (Mouse) protein is Post-GPI attachment to proteins factor 6.